The following is a 494-amino-acid chain: UPF0371 protein SUB1165 (494 aa).

The protein belongs to the UPF0371 family.

The protein is UPF0371 protein SUB1165 of Streptococcus uberis (strain ATCC BAA-854 / 0140J).